Consider the following 311-residue polypeptide: Ribonuclease Z (311 aa).

Zn(2+) is bound by residues H61, H63, D65, H66, H139, D210, and H268. D65 functions as the Proton acceptor in the catalytic mechanism.

This sequence belongs to the RNase Z family. In terms of assembly, homodimer. Zn(2+) is required as a cofactor.

It carries out the reaction Endonucleolytic cleavage of RNA, removing extra 3' nucleotides from tRNA precursor, generating 3' termini of tRNAs. A 3'-hydroxy group is left at the tRNA terminus and a 5'-phosphoryl group is left at the trailer molecule.. Functionally, zinc phosphodiesterase, which displays some tRNA 3'-processing endonuclease activity. Probably involved in tRNA maturation, by removing a 3'-trailer from precursor tRNA. This Haloarcula marismortui (strain ATCC 43049 / DSM 3752 / JCM 8966 / VKM B-1809) (Halobacterium marismortui) protein is Ribonuclease Z.